The chain runs to 332 residues: MNPSPLSIHSALSSDALRIDAAAEVDRIAQAMRDQVRNKMRRRGLVIGLSGGVDSSVCAALAAYALGAQNVFAIFMPENDSDPESLSLGQEVAKAFSLEGAIEDIGSALAAMGCYERRDDFIRQVEPAYGSGWSCKVVISSPLAGEGYALSTLVLQAPDGSQTRHRMPASVYLGIVAATNMKQRTRKQMEYYHADRLNYAVLGTPNRLEYDQGFFVKNGDGAADLKPIAHLYKSQVYQIAEYLGVPEEVRRRPPTTDTWSLTQTQEEFYFALPYDRMDLCLHALNEGLGVEETAKATQLTTDQVERVWLDIHSKRKATRPLHLAPLLVQPVF.

48-55 contacts ATP; that stretch reads GLSGGVDS. Asp54 is a Mg(2+) binding site. Residue Arg184 coordinates deamido-NAD(+). Thr204 lines the ATP pocket. Mg(2+) is bound at residue Glu209. Residues Lys217 and Asp224 each coordinate deamido-NAD(+). Residues Lys233 and Thr255 each contribute to the ATP site.

It belongs to the NAD synthetase family. Homodimer.

The catalysed reaction is deamido-NAD(+) + NH4(+) + ATP = AMP + diphosphate + NAD(+) + H(+). Its pathway is cofactor biosynthesis; NAD(+) biosynthesis; NAD(+) from deamido-NAD(+) (ammonia route): step 1/1. In terms of biological role, catalyzes the ATP-dependent amidation of deamido-NAD to form NAD. Uses ammonia as a nitrogen source. This chain is NH(3)-dependent NAD(+) synthetase, found in Rhizobium rhizogenes (strain K84 / ATCC BAA-868) (Agrobacterium radiobacter).